Here is a 315-residue protein sequence, read N- to C-terminus: 4-diphosphocytidyl-2-C-methyl-D-erythritol kinase (315 aa).

Lysine 8 is a catalytic residue. Proline 93–serine 103 lines the ATP pocket. Residue aspartate 135 is part of the active site.

Belongs to the GHMP kinase family. IspE subfamily.

It catalyses the reaction 4-CDP-2-C-methyl-D-erythritol + ATP = 4-CDP-2-C-methyl-D-erythritol 2-phosphate + ADP + H(+). Its pathway is isoprenoid biosynthesis; isopentenyl diphosphate biosynthesis via DXP pathway; isopentenyl diphosphate from 1-deoxy-D-xylulose 5-phosphate: step 3/6. In terms of biological role, catalyzes the phosphorylation of the position 2 hydroxy group of 4-diphosphocytidyl-2C-methyl-D-erythritol. This is 4-diphosphocytidyl-2-C-methyl-D-erythritol kinase from Heliobacterium modesticaldum (strain ATCC 51547 / Ice1).